Here is a 662-residue protein sequence, read N- to C-terminus: Glutathione hydrolase 7 (662 aa).

Over 1 to 106 (MAAENEASQE…ASECSCRQDG (106 aa)) the chain is Cytoplasmic. Residues serine 17, serine 72, serine 79, and serine 83 each carry the phosphoserine modification. Residues 26 to 90 (SFPRLPEDEP…DGSPLRETRK (65 aa)) form a disordered region. A compositionally biased stretch (low complexity) spans 72 to 83 (SSSSEMGSQDGS). Residues 107–127 (LTVIVTACLTFATGVTVALIM) form a helical; Signal-anchor for type II membrane protein membrane-spanning segment. Residues 128–662 (QIYFGDPQIF…SPDAAGATIL (535 aa)) lie on the Extracellular side of the membrane. Asparagine 198, asparagine 267, asparagine 283, asparagine 330, asparagine 353, asparagine 394, asparagine 452, asparagine 519, and asparagine 586 each carry an N-linked (GlcNAc...) asparagine glycan.

The protein belongs to the gamma-glutamyltransferase family. Heterodimer composed of the light and heavy chains. The active site is located in the light chain. Cleaved by autocatalysis into a large and a small subunit and the autocatalytic cleavage is essential to the functional activation of the enzyme.

Its subcellular location is the membrane. The catalysed reaction is an N-terminal (5-L-glutamyl)-[peptide] + an alpha-amino acid = 5-L-glutamyl amino acid + an N-terminal L-alpha-aminoacyl-[peptide]. It carries out the reaction glutathione + H2O = L-cysteinylglycine + L-glutamate. It catalyses the reaction an S-substituted glutathione + H2O = an S-substituted L-cysteinylglycine + L-glutamate. It participates in sulfur metabolism; glutathione metabolism. Its function is as follows. Hydrolyzes and transfers gamma-glutamyl moieties from glutathione and other gamma-glutamyl compounds to acceptors. The protein is Glutathione hydrolase 7 of Bos taurus (Bovine).